Consider the following 664-residue polypeptide: Exoribonuclease 2 (664 aa).

The RNB domain occupies 193 to 521 (RIDMTHIPFV…INHRMLKALI (329 aa)). Residues 568 to 650 (QTLFTGEIFD…ENRSLVAKPT (83 aa)) form the S1 motif domain.

The protein belongs to the RNR ribonuclease family. RNase II subfamily.

The protein localises to the cytoplasm. It catalyses the reaction Exonucleolytic cleavage in the 3'- to 5'-direction to yield nucleoside 5'-phosphates.. Its function is as follows. Involved in mRNA degradation. Hydrolyzes single-stranded polyribonucleotides processively in the 3' to 5' direction. The polypeptide is Exoribonuclease 2 (Vibrio vulnificus (strain CMCP6)).